Here is a 122-residue protein sequence, read N- to C-terminus: Large ribosomal subunit protein uL14c (122 aa).

Belongs to the universal ribosomal protein uL14 family. In terms of assembly, part of the 50S ribosomal subunit.

The protein localises to the plastid. The protein resides in the chloroplast. Its function is as follows. Binds to 23S rRNA. This chain is Large ribosomal subunit protein uL14c, found in Angiopteris evecta (Mule's foot fern).